An 87-amino-acid polypeptide reads, in one-letter code: U3-theraphotoxin-Hhn1a 17 (87 aa).

Residues 1–24 (MVNVKASMFLTFAGLVLLFVVCYA) form the signal peptide. The propeptide occupies 25–52 (SESEEKEFPKEMLSSIFAVDNDFKQEER). Intrachain disulfides connect C54–C67, C61–C72, and C66–C79.

The protein belongs to the neurotoxin 10 (Hwtx-1) family. 51 (Hntx-8) subfamily. Hntx-8 sub-subfamily. Expressed by the venom gland.

The protein localises to the secreted. Functionally, ion channel inhibitor. In Cyriopagopus hainanus (Chinese bird spider), this protein is U3-theraphotoxin-Hhn1a 17.